The chain runs to 2053 residues: Cell adhesion molecule DSCAML1 (2053 aa).

The signal sequence occupies residues 1-18; that stretch reads MWLVTFLLLLDSLHKARP. Ig-like C2-type domains are found at residues 19–119, 115–217, 226–310, 314–396, 408–501, 506–586, 596–685, 690–784, and 788–885; these read EDVG…NIRI, PNIR…ARLS, PTIL…GILT, PLHV…QTAQ, PRIV…ARIN, PSIR…LSIS, PPLI…RQLI, PRFV…MFLT, and PAMI…LTVQ. The Extracellular segment spans residues 19–1591; the sequence is EDVGTSLYFV…AQGEGDDVKK (1573 aa). 7 cysteine pairs are disulfide-bonded: Cys47/Cys103, Cys146/Cys198, Cys247/Cys294, Cys336/Cys386, Cys429/Cys485, Cys526/Cys575, and Cys617/Cys669. N-linked (GlcNAc...) asparagine glycosylation occurs at Asn79. N-linked (GlcNAc...) asparagine glycans are attached at residues Asn368 and Asn471. Residues Asn666 and Asn710 are each glycosylated (N-linked (GlcNAc...) asparagine). Residues Cys711 and Cys767 are joined by a disulfide bond. Asn809 carries N-linked (GlcNAc...) asparagine glycosylation. Cys810 and Cys867 are disulfide-bonded. 4 consecutive Fibronectin type-III domains span residues 887 to 984, 989 to 1088, 1093 to 1189, and 1193 to 1288; these read PPDP…TEEA, PPMD…TLED, PPEN…TKED, and PPAG…AGKA. Residues Asn1144 and Asn1162 are each glycosylated (N-linked (GlcNAc...) asparagine). Positions 1278–1377 constitute an Ig-like C2-type 10 domain; that stretch reads EKVTIEPAGK…TGGFDTIIVN (100 aa). Residues Cys1311 and Cys1363 are joined by a disulfide bond. N-linked (GlcNAc...) asparagine glycosylation occurs at Asn1345. Fibronectin type-III domains lie at 1383–1477 and 1478–1578; these read PPDQ…THGR and EPSF…TIPP. Residue Asn1561 is glycosylated (N-linked (GlcNAc...) asparagine). The helical transmembrane segment at 1592 to 1612 threads the bilayer; the sequence is LFTIGCPVILATLGVALLFVV. The Cytoplasmic segment spans residues 1613–2053; that stretch reads RKKRKEKRLK…GAYSKSYTLV (441 aa). 4 disordered regions span residues 1716–1741, 1773–1803, 1840–1862, and 1974–2053; these read LIDM…HSTR, HGVT…STES, SSDQ…STPS, and LAMP…YTLV. Positions 1732-1741 are enriched in basic residues; sequence KNVKSAHSTR. Over residues 1773 to 1789 the composition is skewed to polar residues; sequence HGVTVTESDSYSASLSQ. A compositionally biased stretch (pro residues) spans 1977 to 1993; sequence PAPPAGTAPPAPGPTPS.

In terms of assembly, homodimer; mediates homophilic interactions to promote cell adhesion. As to expression, in the retina, expressed in the rod photoreceptors, AII amacrine cells and rod bipolar cells (at protein level).

It localises to the cell membrane. It is found in the synapse. Cell adhesion molecule that plays a role in neuronal self-avoidance. Promotes repulsion between specific neuronal processes of either the same cell or the same subtype of cells. Promotes both isoneuronal self-avoidance for creating an orderly neurite arborization in retinal rod bipolar cells and heteroneuronal self-avoidance to maintain mosaic spacing between AII amacrine cells. Adhesion molecule that promotes lamina-specific synaptic connections in the retina: expressed in specific subsets of interneurons and retinal ganglion cells (RGCs) and promotes synaptic connectivity via homophilic interactions. This Mus musculus (Mouse) protein is Cell adhesion molecule DSCAML1 (Dscaml1).